The following is a 234-amino-acid chain: Biosynthetic peptidoglycan transglycosylase (234 aa).

A helical transmembrane segment spans residues 11–31 (RFLLFAMLGFVGLSVLLVLVF).

Belongs to the glycosyltransferase 51 family.

Its subcellular location is the cell inner membrane. The enzyme catalyses [GlcNAc-(1-&gt;4)-Mur2Ac(oyl-L-Ala-gamma-D-Glu-L-Lys-D-Ala-D-Ala)](n)-di-trans,octa-cis-undecaprenyl diphosphate + beta-D-GlcNAc-(1-&gt;4)-Mur2Ac(oyl-L-Ala-gamma-D-Glu-L-Lys-D-Ala-D-Ala)-di-trans,octa-cis-undecaprenyl diphosphate = [GlcNAc-(1-&gt;4)-Mur2Ac(oyl-L-Ala-gamma-D-Glu-L-Lys-D-Ala-D-Ala)](n+1)-di-trans,octa-cis-undecaprenyl diphosphate + di-trans,octa-cis-undecaprenyl diphosphate + H(+). The protein operates within cell wall biogenesis; peptidoglycan biosynthesis. Functionally, peptidoglycan polymerase that catalyzes glycan chain elongation from lipid-linked precursors. This chain is Biosynthetic peptidoglycan transglycosylase, found in Chromohalobacter salexigens (strain ATCC BAA-138 / DSM 3043 / CIP 106854 / NCIMB 13768 / 1H11).